The sequence spans 229 residues: Transmembrane emp24 domain-containing protein 5 (229 aa).

Positions 1–27 (MGGRMWLPFPVLLLSALPAALLRGAAG) are cleaved as a signal peptide. Residues 28–196 (FTPSLDSDFT…IQESNFDRVN (169 aa)) lie on the Lumenal side of the membrane. Residues 45 to 126 (KECFYQPMPL…EKVIFFELIL (82 aa)) form the GOLD domain. The helical transmembrane segment at 197–217 (FWSVVNLMVMVVVSAIQVYTL) threads the bilayer. Topologically, residues 218 to 229 (KSLFEDKRKSRT) are cytoplasmic.

The protein belongs to the EMP24/GP25L family. In terms of assembly, interacts with TMED9 and TMED10.

The protein localises to the endoplasmic reticulum membrane. It localises to the golgi apparatus. Its subcellular location is the cis-Golgi network membrane. The protein resides in the endoplasmic reticulum-Golgi intermediate compartment membrane. Its function is as follows. Potential role in vesicular protein trafficking, mainly in the early secretory pathway. Required for the maintenance of the Golgi apparatus; involved in protein exchange between Golgi stacks during assembly. Probably not required for COPI-vesicle-mediated retrograde transport. In Mus musculus (Mouse), this protein is Transmembrane emp24 domain-containing protein 5 (Tmed5).